Here is a 378-residue protein sequence, read N- to C-terminus: Putative glutamate--cysteine ligase 2 (378 aa).

The protein belongs to the glutamate--cysteine ligase type 2 family. YbdK subfamily.

It catalyses the reaction L-cysteine + L-glutamate + ATP = gamma-L-glutamyl-L-cysteine + ADP + phosphate + H(+). Functionally, ATP-dependent carboxylate-amine ligase which exhibits weak glutamate--cysteine ligase activity. The protein is Putative glutamate--cysteine ligase 2 of Pseudomonas paraeruginosa (strain DSM 24068 / PA7) (Pseudomonas aeruginosa (strain PA7)).